Consider the following 566-residue polypeptide: Sodium-dependent high-affinity dicarboxylate transporter 3 (566 aa).

12 consecutive transmembrane segments (helical) span residues 55–75 (LVLV…GPEW), 92–112 (VMPL…VGVL), 123–139 (NDTN…AAAV), 162–182 (WIML…SNTA), 219–239 (MATG…TGTA), 268–288 (WIFF…MTLV), 329–349 (ILLS…GVFF), 352–372 (GAYT…VLPS), 400–420 (ETFP…AAGV), 439–459 (LPLW…TNIC), 496–516 (FAFI…SGMV), and 521–541 (MAFV…LYMN).

This sequence belongs to the SLC13A/DASS transporter (TC 2.A.47) family. NADC subfamily. As to expression, nad-1 and nad-2 are coexpressed in the intestinal tract from early larvae to adults, expression is from the pharynx through to the anus. Expression level is significantly greater in the anterior half of the intestine than in the posterior half.

The protein resides in the membrane. Functionally, high-affinity sodium-dicarboxylate cotransporter that accepts a range of tricarboxylic acid-cycle intermediates with 4-5 carbon atoms. There is no interaction with monocarboxylates. Plays a role in the regulation of life span. The sequence is that of Sodium-dependent high-affinity dicarboxylate transporter 3 (nac-3) from Caenorhabditis elegans.